The primary structure comprises 144 residues: Large ribosomal subunit protein uL14 (144 aa).

Belongs to the universal ribosomal protein uL14 family. In terms of assembly, part of the 50S ribosomal subunit. Forms a cluster with proteins L3 and L24e, part of which may contact the 16S rRNA in 2 intersubunit bridges.

Its function is as follows. Binds to 23S rRNA. Forms part of two intersubunit bridges in the 70S ribosome. This Caldivirga maquilingensis (strain ATCC 700844 / DSM 13496 / JCM 10307 / IC-167) protein is Large ribosomal subunit protein uL14.